The sequence spans 153 residues: NADPH-dependent 7-cyano-7-deazaguanine reductase (153 aa).

The active-site Thioimide intermediate is cysteine 51. The active-site Proton donor is aspartate 58. Residues 73–75 (LES) and 92–93 (HE) contribute to the substrate site.

This sequence belongs to the GTP cyclohydrolase I family. QueF type 1 subfamily.

Its subcellular location is the cytoplasm. It catalyses the reaction 7-aminomethyl-7-carbaguanine + 2 NADP(+) = 7-cyano-7-deazaguanine + 2 NADPH + 3 H(+). It functions in the pathway tRNA modification; tRNA-queuosine biosynthesis. Functionally, catalyzes the NADPH-dependent reduction of 7-cyano-7-deazaguanine (preQ0) to 7-aminomethyl-7-deazaguanine (preQ1). The sequence is that of NADPH-dependent 7-cyano-7-deazaguanine reductase from Bradyrhizobium diazoefficiens (strain JCM 10833 / BCRC 13528 / IAM 13628 / NBRC 14792 / USDA 110).